Consider the following 41-residue polypeptide: Large ribosomal subunit protein bL36 (41 aa).

The protein belongs to the bacterial ribosomal protein bL36 family.

The polypeptide is Large ribosomal subunit protein bL36 (Ruegeria sp. (strain TM1040) (Silicibacter sp.)).